The primary structure comprises 288 residues: Bifunctional protein MdtA (288 aa).

Residues 129–132 (TGPV), 152–156 (RKLDK), 195–198 (TAGA), and K256 contribute to the NADP(+) site.

In terms of assembly, homotrimer.

It is found in the cytoplasm. The catalysed reaction is 5,10-methylenetetrahydromethanopterin + NADP(+) = 5,10-methenyl-5,6,7,8-tetrahydromethanopterin + NADPH. The enzyme catalyses (6R)-5,10-methylene-5,6,7,8-tetrahydrofolate + NADP(+) = (6R)-5,10-methenyltetrahydrofolate + NADPH. It participates in one-carbon metabolism; formaldehyde degradation; formate from formaldehyde (H(4)MPT route): step 2/5. Functionally, catalyzes the dehydrogenation of methylene-H(4)MPT. Can also catalyze the reversible dehydrogenation of methylene-H(4)F with 20-fold lower catalytic efficiency. The protein is Bifunctional protein MdtA of Methylorubrum extorquens (strain ATCC 14718 / DSM 1338 / JCM 2805 / NCIMB 9133 / AM1) (Methylobacterium extorquens).